A 234-amino-acid polypeptide reads, in one-letter code: Accessory gland protein Acp29AB (234 aa).

Residues 1–21 form the signal peptide; that stretch reads MYASNLLYLLALWNLWDLSGG. Asparagine 61 and asparagine 164 each carry an N-linked (GlcNAc...) asparagine glycan. One can recognise a C-type lectin domain in the interval 137-234; the sequence is VTCRKMNGHL…SFVCQADQWA (98 aa). Cystine bridges form between cysteine 139-cysteine 228 and cysteine 207-cysteine 220.

As to expression, main cells of the accessory gland and in seminal fluid.

Its subcellular location is the secreted. In terms of biological role, responsible for physiological and behavioral changes in mated female flies. The polypeptide is Accessory gland protein Acp29AB (Acp29AB) (Drosophila melanogaster (Fruit fly)).